We begin with the raw amino-acid sequence, 291 residues long: E3 ubiquitin-protein ligase MARCHF8 (291 aa).

Residues 22-72 (YRSKTKEKEREEQNEKTLGHFMSHSSNISKAGSPPSASAPAPVSSFSRTSI) form a disordered region. Over residues 25-39 (KTKEKEREEQNEKTL) the composition is skewed to basic and acidic residues. The segment covering 50–72 (SKAGSPPSASAPAPVSSFSRTSI) has biased composition (low complexity). An RING-CH-type zinc finger spans residues 72–133 (ITPSSQDICR…ELCKYEFIME (62 aa)). Positions 80, 83, 97, 99, 107, 110, 123, and 126 each coordinate Zn(2+). 2 consecutive transmembrane segments (helical) span residues 157 to 177 (CSVTFHVIAITCVVWSLYVLI) and 197 to 217 (FWTKLVVVAIGFTGGLLFMYV). Phosphoserine is present on Ser253.

In terms of assembly, interacts with CD86. Broadly expressed. Present in immature dendritic cells (at protein level).

The protein resides in the golgi apparatus membrane. The protein localises to the endoplasmic reticulum membrane. It is found in the cytoplasmic vesicle membrane. Its subcellular location is the lysosome membrane. It localises to the early endosome membrane. It carries out the reaction S-ubiquitinyl-[E2 ubiquitin-conjugating enzyme]-L-cysteine + [acceptor protein]-L-lysine = [E2 ubiquitin-conjugating enzyme]-L-cysteine + N(6)-ubiquitinyl-[acceptor protein]-L-lysine.. It participates in protein modification; protein ubiquitination. In terms of biological role, E3 ubiquitin-protein ligase that plays several important roles in innate immunity and adaptive immunity. Mediates ubiquitination of CD86 and MHC class II proteins, such as HLA-DR alpha and beta, and promotes their subsequent endocytosis and sorting to lysosomes via multivesicular bodies. Possesses a very broad antiviral activity by specifically inactivating different viral fusion proteins. Targets and ubiquitinates cytoplasmic lysine residues of viral envelope glycoproteins with single transmembrane domains leading to their lysosomal degradation. Therefore, shows broad-spectrum inhibition against many viruses including retroviruses, rhabdoviruses, arenaviruses, sarbecoviruses or influenzaviruses. Strongly blocks human immunodeficiency virus type 1 envelope glycoprotein incorporation into virions by down-regulating its cell surface expression. Also blocks ebola virus glycoprotein/GP incorporation via surface down-regulation. Mediates 'Lys-63'-linked polyubiquitination of influenza M2 to target it to lysosome for degradation. Mediates the regulation of constitutive ubiquitination and trafficking of the viral restriction factor BST2 within the endocytic pathway. Plays a role in maintenance of immune tolerance to self by promoting the turnover and proteasomal degradation of PD-L1/CD274 via ubiquitination. Catalyzes the 'Lys-63'-linked polyubiquitylation of cGAS thereby inhibiting its DNA binding ability and impairing its antiviral innate immunity. Negatively regulates IL7-mediated T-cell homeostasis by mediating 'Lys-27'-linked polyubiquitination of IL7R, leading to its lysosomal degradation. Functionally, (Microbial infection) Mediates 'Lys-63'-linked polyubiquitination of hepatitis C virus/HCV protein NS2 which allows its binding to HGS, an ESCRT-0 complex component, and this interaction is essential for HCV envelopment. The chain is E3 ubiquitin-protein ligase MARCHF8 from Homo sapiens (Human).